The following is a 328-amino-acid chain: Methionyl-tRNA formyltransferase (328 aa).

A (6S)-5,6,7,8-tetrahydrofolate-binding site is contributed by 110 to 113 (SNLP).

It belongs to the Fmt family.

The enzyme catalyses L-methionyl-tRNA(fMet) + (6R)-10-formyltetrahydrofolate = N-formyl-L-methionyl-tRNA(fMet) + (6S)-5,6,7,8-tetrahydrofolate + H(+). In terms of biological role, attaches a formyl group to the free amino group of methionyl-tRNA(fMet). The formyl group appears to play a dual role in the initiator identity of N-formylmethionyl-tRNA by promoting its recognition by IF2 and preventing the misappropriation of this tRNA by the elongation apparatus. This is Methionyl-tRNA formyltransferase from Bifidobacterium longum (strain DJO10A).